We begin with the raw amino-acid sequence, 256 residues long: Small ribosomal subunit protein eS1 (256 aa).

Alanine 2 is modified (N-acetylalanine; partial).

It belongs to the eukaryotic ribosomal protein eS1 family. In terms of assembly, component of the small ribosomal subunit. Mature ribosomes consist of a small (40S) and a large (60S) subunit. The 40S subunit contains about 33 different proteins and 1 molecule of RNA (18S). The 60S subunit contains about 49 different proteins and 3 molecules of RNA (25S, 5.8S and 5S).

It is found in the cytoplasm. The chain is Small ribosomal subunit protein eS1 (rps1) from Botryotinia fuckeliana (strain B05.10) (Noble rot fungus).